The chain runs to 212 residues: Dephospho-CoA kinase (212 aa).

The DPCK domain maps to 6-211; sequence RLGLTGGIGS…LSCQPLSPNQ (206 aa). 14–19 contacts ATP; the sequence is GSGKST.

This sequence belongs to the CoaE family.

Its subcellular location is the cytoplasm. The catalysed reaction is 3'-dephospho-CoA + ATP = ADP + CoA + H(+). The protein operates within cofactor biosynthesis; coenzyme A biosynthesis; CoA from (R)-pantothenate: step 5/5. In terms of biological role, catalyzes the phosphorylation of the 3'-hydroxyl group of dephosphocoenzyme A to form coenzyme A. This chain is Dephospho-CoA kinase, found in Albidiferax ferrireducens (strain ATCC BAA-621 / DSM 15236 / T118) (Rhodoferax ferrireducens).